The following is a 181-amino-acid chain: Nucleoside-triphosphatase THEP1 (181 aa).

ATP contacts are provided by residues 12–19 (GPVGSIKS) and 104–111 (VIVIDEIG).

This sequence belongs to the THEP1 NTPase family.

It carries out the reaction a ribonucleoside 5'-triphosphate + H2O = a ribonucleoside 5'-diphosphate + phosphate + H(+). Has nucleotide phosphatase activity towards ATP, GTP, CTP, TTP and UTP. May hydrolyze nucleoside diphosphates with lower efficiency. This is Nucleoside-triphosphatase THEP1 from Thermoplasma acidophilum (strain ATCC 25905 / DSM 1728 / JCM 9062 / NBRC 15155 / AMRC-C165).